Consider the following 290-residue polypeptide: Probable protein phosphatase 2C 62 (290 aa).

A PPM-type phosphatase domain is found at K38–F288. D75, G76, D240, and D279 together coordinate Mn(2+).

The protein belongs to the PP2C family. It depends on Mg(2+) as a cofactor. Mn(2+) serves as cofactor.

The enzyme catalyses O-phospho-L-seryl-[protein] + H2O = L-seryl-[protein] + phosphate. It carries out the reaction O-phospho-L-threonyl-[protein] + H2O = L-threonyl-[protein] + phosphate. This Oryza sativa subsp. japonica (Rice) protein is Probable protein phosphatase 2C 62.